Here is a 37-residue protein sequence, read N- to C-terminus: Large ribosomal subunit protein bL36 (37 aa).

Positions 11, 14, 27, and 32 each coordinate Zn(2+).

Belongs to the bacterial ribosomal protein bL36 family. As to quaternary structure, part of the 50S ribosomal subunit. It depends on Zn(2+) as a cofactor.

Functionally, binds the 23S rRNA. In Deinococcus radiodurans (strain ATCC 13939 / DSM 20539 / JCM 16871 / CCUG 27074 / LMG 4051 / NBRC 15346 / NCIMB 9279 / VKM B-1422 / R1), this protein is Large ribosomal subunit protein bL36 (rpmJ).